The chain runs to 135 residues: Large ribosomal subunit protein uL16 (135 aa).

The protein belongs to the universal ribosomal protein uL16 family. Part of the 50S ribosomal subunit.

Functionally, binds 23S rRNA and is also seen to make contacts with the A and possibly P site tRNAs. The polypeptide is Large ribosomal subunit protein uL16 (Bdellovibrio bacteriovorus (strain ATCC 15356 / DSM 50701 / NCIMB 9529 / HD100)).